Here is a 279-residue protein sequence, read N- to C-terminus: MKIISCIEELRDHLRGQLRTAFVPTMGNLHDGHLSLMRLARKHGDPVVASIFVNRLQFGPNEDFDRYPRTFQADVEKLEKEGVYILFAPTEKDLYPEPQEFRVQPPNDLGNTLEGEFRPGFFSGVTTIVLKLFSCVQPSVAVFGKKDYQQLMIVRNMSKQFALPTEIIAAETYRAEDGLALSSRNMYLSAEERAEAPALFKSLNAVANEVRSGHLDIFQLERQAMADLSQRGWKPDYISIRKRSNLQPPSAGDMAQGEKLVVLAAAKLGATRLIDNLEI.

26–33 (MGNLHDGH) contacts ATP. Catalysis depends on His33, which acts as the Proton donor. Gln57 provides a ligand contact to (R)-pantoate. Gln57 contributes to the beta-alanine binding site. Position 144–147 (144–147 (GKKD)) interacts with ATP. Gln150 lines the (R)-pantoate pocket. 181–184 (LSSR) provides a ligand contact to ATP.

The protein belongs to the pantothenate synthetase family. Homodimer.

The protein resides in the cytoplasm. The catalysed reaction is (R)-pantoate + beta-alanine + ATP = (R)-pantothenate + AMP + diphosphate + H(+). It participates in cofactor biosynthesis; (R)-pantothenate biosynthesis; (R)-pantothenate from (R)-pantoate and beta-alanine: step 1/1. Catalyzes the condensation of pantoate with beta-alanine in an ATP-dependent reaction via a pantoyl-adenylate intermediate. This is Pantothenate synthetase from Herminiimonas arsenicoxydans.